The chain runs to 733 residues: Tyrosine-protein kinase ptk (733 aa).

A run of 2 helical transmembrane segments spans residues 19 to 39 and 438 to 458; these read LFFSLIAQWKLIALCIILSLI and LQILILSIFLGGFLGTLLALL. 542 to 550 is an ATP binding site; sequence GPAPEVGKS.

The protein belongs to the etk/wzc family. Mg(2+) is required as a cofactor. Requires Mn(2+) as cofactor. Autophosphorylated on several Tyr residues. Dephosphorylated by ptp.

It localises to the cell inner membrane. It carries out the reaction L-tyrosyl-[protein] + ATP = O-phospho-L-tyrosyl-[protein] + ADP + H(+). Its pathway is glycan metabolism; exopolysaccharide biosynthesis. Its function is as follows. May be involved in the production and the transport of exopolysaccharides. This Acinetobacter johnsonii protein is Tyrosine-protein kinase ptk (ptk).